The sequence spans 147 residues: Plasminogen receptor (KT) (147 aa).

Residues 1 to 52 (MGFIFSKSMNENMKNQQEFMVTHARLQLERHLTMQNEMRERQMAMQIAWSRE) are Extracellular-facing. Residues 53-73 (FLKYFGTFFGIATISLATGAL) form a helical membrane-spanning segment. Topologically, residues 74–78 (KRKKP) are cytoplasmic. A helical membrane pass occupies residues 79–99 (AFLVPIVPLSFIFTYQYDLGY). The Extracellular segment spans residues 100–147 (GTLLQRMKSEAEDILETEKTKLELPKGLITFESLEKARREQSKLFSDK).

As to quaternary structure, interacts with PLAT. Interacts with PLAUR. In terms of tissue distribution, expressed in monocytes; detected in differentiated monocytes but not in progenitor cells. Expressed in adrenal medulla and hippocampus.

It is found in the cell membrane. In terms of biological role, receptor for plasminogen. Regulates urokinase plasminogen activator-dependent and stimulates tissue-type plasminogen activator-dependent cell surface plasminogen activation. Proposed to be part of a local catecholaminergic cell plasminogen activation system that regulates neuroendocrine prohormone processing. Involved in regulation of inflammatory response; regulates monocyte chemotactic migration and matrix metalloproteinase activation, such as of MMP2 and MMP9. This chain is Plasminogen receptor (KT) (Plgrkt), found in Mus musculus (Mouse).